The primary structure comprises 221 residues: Ras-related protein Rab-27A (221 aa).

Ser-2 carries the post-translational modification N-acetylserine. Residue Ser-2 is modified to Phosphoserine. 16–24 (GDSGVGKTS) lines the GTP pocket. The short motif at 38–46 (FITTVGIDF) is the Effector region element. Residues 74–78 (DTAGQ), 133–136 (NKSD), and 163–165 (SAA) each bind GTP. Cys-123 and Cys-188 are disulfide-bonded. Residues Cys-219 and Cys-221 are each lipidated (S-geranylgeranyl cysteine). Position 221 is a cysteine methyl ester (Cys-221).

Belongs to the small GTPase superfamily. Rab family. As to quaternary structure, binds SYTL1, SLAC2B, MYRIP, SYTL3, SYTL4 and SYTL5. Interacts with RPH3A and RPH3A. Binds MLPH and SYTL2. Interacts with UNC13D. Does not interact with the BLOC-3 complex (heterodimer of HPS1 and HPS4). Interacts (GDP-bound form preferentially) with DENND10.

Its subcellular location is the membrane. It is found in the melanosome. The protein localises to the late endosome. The protein resides in the lysosome. The enzyme catalyses GTP + H2O = GDP + phosphate + H(+). Its activity is regulated as follows. Regulated by guanine nucleotide exchange factors (GEFs) which promote the exchange of bound GDP for free GTP, GTPase activating proteins (GAPs) which increase the GTP hydrolysis activity, and GDP dissociation inhibitors which inhibit the dissociation of the nucleotide from the GTPase. Activated by GEFs such as DENND10. In terms of biological role, small GTPase which cycles between active GTP-bound and inactive GDP-bound states. In its active state, binds to a variety of effector proteins to regulate homeostasis of late endocytic pathway, including endosomal positioning, maturation and secretion. Plays a role in cytotoxic granule exocytosis in lymphocytes. Required for both granule maturation and granule docking and priming at the immunologic synapse. This Canis lupus familiaris (Dog) protein is Ras-related protein Rab-27A (RAB27A).